We begin with the raw amino-acid sequence, 172 residues long: Protein GrpE (172 aa).

It belongs to the GrpE family. As to quaternary structure, homodimer.

It is found in the cytoplasm. Participates actively in the response to hyperosmotic and heat shock by preventing the aggregation of stress-denatured proteins, in association with DnaK and GrpE. It is the nucleotide exchange factor for DnaK and may function as a thermosensor. Unfolded proteins bind initially to DnaJ; upon interaction with the DnaJ-bound protein, DnaK hydrolyzes its bound ATP, resulting in the formation of a stable complex. GrpE releases ADP from DnaK; ATP binding to DnaK triggers the release of the substrate protein, thus completing the reaction cycle. Several rounds of ATP-dependent interactions between DnaJ, DnaK and GrpE are required for fully efficient folding. The protein is Protein GrpE of Thermotoga sp. (strain RQ2).